Consider the following 301-residue polypeptide: Putative S-adenosyl-L-methionine-dependent methyltransferase BCG_0775c (301 aa).

S-adenosyl-L-methionine is bound by residues Asp-130 and 159–160 (DL).

Belongs to the UPF0677 family.

In terms of biological role, exhibits S-adenosyl-L-methionine-dependent methyltransferase activity. The polypeptide is Putative S-adenosyl-L-methionine-dependent methyltransferase BCG_0775c (Mycobacterium bovis (strain BCG / Pasteur 1173P2)).